The following is a 46-amino-acid chain: Large ribosomal subunit protein bL33B (46 aa).

Belongs to the bacterial ribosomal protein bL33 family.

This is Large ribosomal subunit protein bL33B (rpmG2) from Mycoplasmopsis pulmonis (strain UAB CTIP) (Mycoplasma pulmonis).